Reading from the N-terminus, the 844-residue chain is DNA mismatch repair protein MutS (844 aa).

Position 602 to 609 (602 to 609 (GPNMSGKS)) interacts with ATP.

Belongs to the DNA mismatch repair MutS family.

This protein is involved in the repair of mismatches in DNA. It is possible that it carries out the mismatch recognition step. This protein has a weak ATPase activity. In Streptococcus pneumoniae (strain ATCC 700669 / Spain 23F-1), this protein is DNA mismatch repair protein MutS.